A 428-amino-acid polypeptide reads, in one-letter code: Immunoglobulin superfamily containing leucine-rich repeat protein (428 aa).

Positions 1–18 (MRALCLLCWAVLLNLVRA) are cleaved as a signal peptide. An LRRNT domain is found at 19-50 (CPEPCDCGEKYGFQIADCAYRDLEGVPPGFPA). A glycan (N-linked (GlcNAc...) asparagine) is linked at Asn51. 5 LRR repeats span residues 51 to 72 (NVTT…AFRE), 75 to 98 (LLQS…APLS), 99 to 122 (HLKS…HNLS), 123 to 144 (ALQL…AFSS), and 147 to 168 (ALRS…TFAP). The 52-residue stretch at 180–231 (NPFDCTCGIVWFKTWALASAVSIPEQDNIACTTPHVLKGIPLGRLPPLPCSA) folds into the LRRCT domain. The Ig-like domain maps to 232–343 (PSVQLSYQPS…GSAESSVNVA (112 aa)). Cys257 and Cys327 are oxidised to a cystine. The N-linked (GlcNAc...) asparagine glycan is linked to Asn309.

Detected in thyroid, heart, retina and spinal cord.

It localises to the secreted. The polypeptide is Immunoglobulin superfamily containing leucine-rich repeat protein (Islr) (Mus musculus (Mouse)).